Consider the following 25-residue polypeptide: Small ribosomal subunit protein eS32 (25 aa).

A disordered region spans residues Met1–Lys25.

The protein belongs to the eukaryotic ribosomal protein eS32 family. Component of the large ribosomal subunit.

The protein localises to the cytoplasm. Its function is as follows. Component of the small ribosomal subunit. The ribosome is a large ribonucleoprotein complex responsible for the synthesis of proteins in the cell. This Cyprinus carpio (Common carp) protein is Small ribosomal subunit protein eS32 (rpl41).